A 339-amino-acid polypeptide reads, in one-letter code: Fructose-1,6-bisphosphatase class 1 (339 aa).

Positions 91, 113, 115, and 116 each coordinate Mg(2+). Residues 116-119 (DGSS), Asn208, and Lys274 each bind substrate. Glu280 provides a ligand contact to Mg(2+).

It belongs to the FBPase class 1 family. As to quaternary structure, homotetramer. Mg(2+) serves as cofactor.

The protein localises to the cytoplasm. It carries out the reaction beta-D-fructose 1,6-bisphosphate + H2O = beta-D-fructose 6-phosphate + phosphate. It functions in the pathway carbohydrate biosynthesis; gluconeogenesis. The sequence is that of Fructose-1,6-bisphosphatase class 1 from Cupriavidus pinatubonensis (strain JMP 134 / LMG 1197) (Cupriavidus necator (strain JMP 134)).